The sequence spans 655 residues: Tumor necrosis factor receptor superfamily member 21 (655 aa).

The signal sequence occupies residues 1 to 41 (MGTRASSITALASCSRTAGQVGATMVAGSLLLLGFLSTITA). Topologically, residues 42–349 (QPEQKTLSLP…AHKHFDINEH (308 aa)) are extracellular. TNFR-Cys repeat units lie at residues 50-88 (LPGT…LRVC), 90-131 (SCPA…DREC), 133-167 (CPPG…EDVR), and 170-211 (QCAR…DNVC). Disulfide bonds link Cys-67–Cys-80, Cys-70–Cys-88, Cys-91–Cys-106, Cys-109–Cys-123, Cys-113–Cys-131, Cys-133–Cys-144, Cys-150–Cys-168, Cys-171–Cys-186, and Cys-192–Cys-211. The N-linked (GlcNAc...) asparagine glycan is linked to Asn-82. N-linked (GlcNAc...) asparagine glycosylation is present at Asn-141. Disordered stretches follow at residues 222–305 (PPSS…QAPH) and 318–339 (EATG…PRQN). 2 stretches are compositionally biased toward polar residues: residues 241-262 (VPSS…TASV) and 276-302 (PDNT…THQQ). 4 N-linked (GlcNAc...) asparagine glycosylation sites follow: Asn-252, Asn-257, Asn-278, and Asn-289. Residues 330–339 (APKRGHPRQN) are compositionally biased toward basic residues. Residues 350-370 (LPWMIVLFLLLVLVLIVVCSI) traverse the membrane as a helical segment. Cys-368 carries the S-palmitoyl cysteine lipid modification. The Cytoplasmic portion of the chain corresponds to 371–655 (RKSSRTLKKG…SVYSHLPDLL (285 aa)). Residues 415 to 498 (GIDILKLVAA…DVVEKIRGLM (84 aa)) form the Death domain.

As to quaternary structure, associates with TRADD. Interacts with NGFR. Interacts with CASP8. In terms of processing, oxidized in response to reactive oxygen species (ROS), leading to endocytosis. As to expression, detected in spleen B-cells (at protein level). Ubiquitous. Highly expressed in adult spleen, thymus, testis, prostate, ovary, small intestine, colon, brain, lung and kidney, and in fetal brain, liver and lung. Detected at lower levels in adult peripheral blood leukocytes, lung, and in fetal muscle, heart, kidney, small intestine and skin. Detected in T-cells, B-cells and monocytes. In T-cells expression is highest in Th0 cells, intermediate in Th2 cells and lower in Th1 cells. Expressed at low levels in proliferating progenitors in the spinal cord, but is highly expressed by differentiating neurons within the spinal cord and adjacent dorsal root ganglia.

The protein resides in the cell membrane. Functionally, promotes apoptosis, possibly via a pathway that involves the activation of NF-kappa-B. Can also promote apoptosis mediated by BAX and by the release of cytochrome c from the mitochondria into the cytoplasm. Trophic-factor deprivation triggers the cleavage of surface APP by beta-secretase to release sAPP-beta which is further cleaved to release an N-terminal fragment of APP (N-APP). Negatively regulates oligodendrocyte survival, maturation and myelination. Plays a role in signaling cascades triggered by stimulation of T-cell receptors, in the adaptive immune response and in the regulation of T-cell differentiation and proliferation. Negatively regulates T-cell responses and the release of cytokines such as IL4, IL5, IL10, IL13 and IFNG by Th2 cells. Negatively regulates the production of IgG, IgM and IgM in response to antigens. May inhibit the activation of JNK in response to T-cell stimulation. Also acts as a regulator of pyroptosis: recruits CASP8 in response to reactive oxygen species (ROS) and subsequent oxidation, leading to activation of GSDMC. In Mus musculus (Mouse), this protein is Tumor necrosis factor receptor superfamily member 21 (Tnfrsf21).